The sequence spans 152 residues: UPF0266 membrane protein KPK_1957 (152 aa).

3 consecutive transmembrane segments (helical) span residues 6 to 26, 45 to 65, and 67 to 87; these read LVII…QFIM, VDGL…ITQH, and TPIT…LFWI.

This sequence belongs to the UPF0266 family.

Its subcellular location is the cell inner membrane. The chain is UPF0266 membrane protein KPK_1957 from Klebsiella pneumoniae (strain 342).